A 470-amino-acid polypeptide reads, in one-letter code: 3-isopropylmalate dehydratase large subunit (470 aa).

3 residues coordinate [4Fe-4S] cluster: C351, C411, and C414.

It belongs to the aconitase/IPM isomerase family. LeuC type 1 subfamily. As to quaternary structure, heterodimer of LeuC and LeuD. [4Fe-4S] cluster serves as cofactor.

The enzyme catalyses (2R,3S)-3-isopropylmalate = (2S)-2-isopropylmalate. The protein operates within amino-acid biosynthesis; L-leucine biosynthesis; L-leucine from 3-methyl-2-oxobutanoate: step 2/4. Functionally, catalyzes the isomerization between 2-isopropylmalate and 3-isopropylmalate, via the formation of 2-isopropylmaleate. This chain is 3-isopropylmalate dehydratase large subunit, found in Shewanella frigidimarina (strain NCIMB 400).